Reading from the N-terminus, the 190-residue chain is Shikimate kinase (190 aa).

ATP is bound at residue 15 to 20 (GSGKST). Ser19 serves as a coordination point for Mg(2+). Substrate contacts are provided by Asp37, Arg61, and Gly83. Arg121 contributes to the ATP binding site. Arg148 provides a ligand contact to substrate.

Belongs to the shikimate kinase family. Monomer. Requires Mg(2+) as cofactor.

The protein localises to the cytoplasm. The catalysed reaction is shikimate + ATP = 3-phosphoshikimate + ADP + H(+). The protein operates within metabolic intermediate biosynthesis; chorismate biosynthesis; chorismate from D-erythrose 4-phosphate and phosphoenolpyruvate: step 5/7. Catalyzes the specific phosphorylation of the 3-hydroxyl group of shikimic acid using ATP as a cosubstrate. In Chlorobium chlorochromatii (strain CaD3), this protein is Shikimate kinase.